We begin with the raw amino-acid sequence, 577 residues long: MNIQSILSDKIKQAMILAGADQSCDALIRQSGKPQFGDYQANGIMAAAKKLGLNPREFAQKVLDNAQLSDIAEKLEIAGPGFINIFLNPTWLTTEISAALSHKNLGIQATNKQTVVIDYSSPNVAKEMHVGHLRSTIIGDAVARTLEFLGHNVIRANHVGDWGTQFGMLIAYLEKMQHEHASEMELQDLEAFYREAKKHYDEDEIFAEKARNYVVKLQSGDEYCRTMWKRLVDITMQQNQHNYNRLNVTLTEKDVMGESLYNPMLPSIVEDLKKQGLAVENDGALVVYLDEFKNKDGDPMGVIVQKKDGGFLYTTTDIAAAKYRYETLKANRALVFSDTRQSQHMQQAWLITRKAGYVPDSFSLEHKNFGMMLGKDGKPFKTRTGGTIKLADLLDEAIERATVLINEKNTNLSNDEKEAVIEAVGIGAVKYADLSKNRTTDYVFDWDNMLSFEGNTAPYMQYAYTRIRSIFNKTDINSTALLAAPLTIKDDKERTLAIKLLQFEEAVQTVGKEGTPHVLCAYLYELAGIFSSFYEHCPILNAEDESIKLSRLKLALLTEKTLKQGLTLLGIKTVEKM.

Residues 122-132 (PNVAKEMHVGH) carry the 'HIGH' region motif.

This sequence belongs to the class-I aminoacyl-tRNA synthetase family. In terms of assembly, monomer.

It localises to the cytoplasm. It carries out the reaction tRNA(Arg) + L-arginine + ATP = L-arginyl-tRNA(Arg) + AMP + diphosphate. This is Arginine--tRNA ligase from Haemophilus influenzae (strain PittGG).